Reading from the N-terminus, the 119-residue chain is Ribonuclease P protein component (119 aa).

This sequence belongs to the RnpA family. As to quaternary structure, consists of a catalytic RNA component (M1 or rnpB) and a protein subunit.

The enzyme catalyses Endonucleolytic cleavage of RNA, removing 5'-extranucleotides from tRNA precursor.. In terms of biological role, RNaseP catalyzes the removal of the 5'-leader sequence from pre-tRNA to produce the mature 5'-terminus. It can also cleave other RNA substrates such as 4.5S RNA. The protein component plays an auxiliary but essential role in vivo by binding to the 5'-leader sequence and broadening the substrate specificity of the ribozyme. This chain is Ribonuclease P protein component, found in Escherichia fergusonii (strain ATCC 35469 / DSM 13698 / CCUG 18766 / IAM 14443 / JCM 21226 / LMG 7866 / NBRC 102419 / NCTC 12128 / CDC 0568-73).